Here is a 185-residue protein sequence, read N- to C-terminus: Elongation factor P (185 aa).

This sequence belongs to the elongation factor P family.

It localises to the cytoplasm. It participates in protein biosynthesis; polypeptide chain elongation. Involved in peptide bond synthesis. Stimulates efficient translation and peptide-bond synthesis on native or reconstituted 70S ribosomes in vitro. Probably functions indirectly by altering the affinity of the ribosome for aminoacyl-tRNA, thus increasing their reactivity as acceptors for peptidyl transferase. The sequence is that of Elongation factor P from Staphylococcus saprophyticus subsp. saprophyticus (strain ATCC 15305 / DSM 20229 / NCIMB 8711 / NCTC 7292 / S-41).